Here is a 395-residue protein sequence, read N- to C-terminus: Elongation factor Tu (395 aa).

In terms of domain architecture, tr-type G spans 10-204 (KPHVNIGTIG…EVDAYIPTPE (195 aa)). A G1 region spans residues 19 to 26 (GHVDHGKT). 19–26 (GHVDHGKT) lines the GTP pocket. Residue Thr-26 coordinates Mg(2+). A G2 region spans residues 60-64 (GITIS). A G3 region spans residues 81–84 (DCPG). GTP contacts are provided by residues 81-85 (DCPGH) and 136-139 (NKCD). The tract at residues 136 to 139 (NKCD) is G4. Positions 174 to 176 (SAL) are G5.

The protein belongs to the TRAFAC class translation factor GTPase superfamily. Classic translation factor GTPase family. EF-Tu/EF-1A subfamily. Monomer.

The protein resides in the cytoplasm. The enzyme catalyses GTP + H2O = GDP + phosphate + H(+). Functionally, GTP hydrolase that promotes the GTP-dependent binding of aminoacyl-tRNA to the A-site of ribosomes during protein biosynthesis. This is Elongation factor Tu from Bacillus cereus (strain ATCC 10987 / NRS 248).